A 546-amino-acid polypeptide reads, in one-letter code: MAAKEVRFGDDARSKMLKGVNTLANAVKVTLGPKGRNVVLDKSFGAPTITKDGVSVAKEIELEDKFENMGAQMVKEVASKANDEAGDGTTTATVLAQAIVTEGLKSVAAGMNPMDLKRGIDKAVIAAVEELKALSTDCADSKSIAQVGTISANSDAEVGDIIAQAMEKVGKEGVITVEEGQALQNELDVVEGMQFDRGYLSPYFINNQENGTVELDNPFILLVDKKISNIRELLPTLEGVAKAGKPLMIIAEDVEGEALATLVVNNMRGIVKVAAVKAPGFGDRRKAMLQDIAILTGGTVISEEIGLELEKVQLEDLGTAKRVVINKDNTTVVDGNGDQEAIEGRCAQIKGQIEESSSDYDKEKLQERLAKLSGGVAVIKVGAATEVEMKEKKDRVEDALHATRAAVEEGVVPGGGVALVRAAAKLSELTGDNEDQTVGVKLALRAMEAPLRQISINSGAEASVVVNEVKNGDGNYGYNAGNDTYGDMLEMGILDPTKVTRSALQFASSIASLMITTEAMVAELPKDEAAPAMPDMGGMGGMGGMM.

ATP-binding positions include 30 to 33 (TLGP), lysine 51, 87 to 91 (DGTTT), glycine 415, and aspartate 495.

It belongs to the chaperonin (HSP60) family. As to quaternary structure, forms a cylinder of 14 subunits composed of two heptameric rings stacked back-to-back. Interacts with the co-chaperonin GroES.

Its subcellular location is the cytoplasm. The enzyme catalyses ATP + H2O + a folded polypeptide = ADP + phosphate + an unfolded polypeptide.. In terms of biological role, together with its co-chaperonin GroES, plays an essential role in assisting protein folding. The GroEL-GroES system forms a nano-cage that allows encapsulation of the non-native substrate proteins and provides a physical environment optimized to promote and accelerate protein folding. The chain is Chaperonin GroEL from Alteromonas mediterranea (strain DSM 17117 / CIP 110805 / LMG 28347 / Deep ecotype).